The primary structure comprises 472 residues: Ribulose bisphosphate carboxylase large chain (472 aa).

Substrate-binding residues include N116 and T166. K168 acts as the Proton acceptor in catalysis. K170 contacts substrate. 3 residues coordinate Mg(2+): K194, D196, and E197. The residue at position 194 (K194) is an N6-carboxylysine. H287 acts as the Proton acceptor in catalysis. Substrate is bound by residues R288, H320, and S372.

This sequence belongs to the RuBisCO large chain family. Type I subfamily. In terms of assembly, heterohexadecamer of 8 large chains and 8 small chains. The cofactor is Mg(2+).

It carries out the reaction 2 (2R)-3-phosphoglycerate + 2 H(+) = D-ribulose 1,5-bisphosphate + CO2 + H2O. The enzyme catalyses D-ribulose 1,5-bisphosphate + O2 = 2-phosphoglycolate + (2R)-3-phosphoglycerate + 2 H(+). Its function is as follows. RuBisCO catalyzes two reactions: the carboxylation of D-ribulose 1,5-bisphosphate, the primary event in carbon dioxide fixation, as well as the oxidative fragmentation of the pentose substrate. Both reactions occur simultaneously and in competition at the same active site. This is Ribulose bisphosphate carboxylase large chain from Nitrobacter vulgaris.